Consider the following 366-residue polypeptide: Mitochondrial substrate carrier family protein H (366 aa).

The segment covering 1–25 (MLSNSVNNNNNNNNINNSNSNNNDS) has biased composition (low complexity). The tract at residues 1 to 26 (MLSNSVNNNNNNNNINNSNSNNNDSN) is disordered. Solcar repeat units follow at residues 29-121 (KNVK…LKEY), 132-243 (NIYT…LKNK), and 259-360 (SPFF…IKQS). 6 helical membrane-spanning segments follow: residues 35-55 (MVAS…LDVV), 96-112 (GVTP…TIYF), 133-151 (IYTV…SASV), 175-192 (VAMA…IPLS), 262-282 (FINF…TTPI), and 340-357 (VAKV…FEYI).

Belongs to the mitochondrial carrier (TC 2.A.29) family.

It localises to the mitochondrion inner membrane. Functionally, mitochondrial transporter required for glutathione import into mitochondria. In Dictyostelium discoideum (Social amoeba), this protein is Mitochondrial substrate carrier family protein H.